We begin with the raw amino-acid sequence, 352 residues long: 3-isopropylmalate dehydrogenase (352 aa).

Positions 91, 101, 129, and 218 each coordinate substrate. Residues D218, D242, and D246 each coordinate Mg(2+). 281–293 (GSAPDIAGKGLAN) lines the NAD(+) pocket.

It belongs to the isocitrate and isopropylmalate dehydrogenases family. LeuB type 1 subfamily. Homodimer. Mg(2+) serves as cofactor. Mn(2+) is required as a cofactor.

It is found in the cytoplasm. The catalysed reaction is (2R,3S)-3-isopropylmalate + NAD(+) = 4-methyl-2-oxopentanoate + CO2 + NADH. The protein operates within amino-acid biosynthesis; L-leucine biosynthesis; L-leucine from 3-methyl-2-oxobutanoate: step 3/4. In terms of biological role, catalyzes the oxidation of 3-carboxy-2-hydroxy-4-methylpentanoate (3-isopropylmalate) to 3-carboxy-4-methyl-2-oxopentanoate. The product decarboxylates to 4-methyl-2 oxopentanoate. The chain is 3-isopropylmalate dehydrogenase from Novosphingobium aromaticivorans (strain ATCC 700278 / DSM 12444 / CCUG 56034 / CIP 105152 / NBRC 16084 / F199).